A 294-amino-acid polypeptide reads, in one-letter code: Lipoyl synthase (294 aa).

Residues C35, C40, C46, C61, C65, C68, and S275 each contribute to the [4Fe-4S] cluster site. The 219-residue stretch at 46–264 (CWGGGTATVM…RDQGLALGFR (219 aa)) folds into the Radical SAM core domain.

The protein belongs to the radical SAM superfamily. Lipoyl synthase family. The cofactor is [4Fe-4S] cluster.

It localises to the cytoplasm. The catalysed reaction is [[Fe-S] cluster scaffold protein carrying a second [4Fe-4S](2+) cluster] + N(6)-octanoyl-L-lysyl-[protein] + 2 oxidized [2Fe-2S]-[ferredoxin] + 2 S-adenosyl-L-methionine + 4 H(+) = [[Fe-S] cluster scaffold protein] + N(6)-[(R)-dihydrolipoyl]-L-lysyl-[protein] + 4 Fe(3+) + 2 hydrogen sulfide + 2 5'-deoxyadenosine + 2 L-methionine + 2 reduced [2Fe-2S]-[ferredoxin]. Its pathway is protein modification; protein lipoylation via endogenous pathway; protein N(6)-(lipoyl)lysine from octanoyl-[acyl-carrier-protein]: step 2/2. Catalyzes the radical-mediated insertion of two sulfur atoms into the C-6 and C-8 positions of the octanoyl moiety bound to the lipoyl domains of lipoate-dependent enzymes, thereby converting the octanoylated domains into lipoylated derivatives. The protein is Lipoyl synthase of Anaeromyxobacter dehalogenans (strain 2CP-C).